The sequence spans 163 residues: NADH-quinone oxidoreductase subunit I (163 aa).

2 4Fe-4S ferredoxin-type domains span residues 53-83 (LRRYPNGEERCIACKLCEAICPAQAITIEAG) and 94-123 (VRYDIDMVKCIYCGFCQEACPVDAIVEGPN). [4Fe-4S] cluster-binding residues include Cys63, Cys66, Cys69, Cys73, Cys103, Cys106, Cys109, and Cys113.

This sequence belongs to the complex I 23 kDa subunit family. In terms of assembly, NDH-1 is composed of 14 different subunits. Subunits NuoA, H, J, K, L, M, N constitute the membrane sector of the complex. It depends on [4Fe-4S] cluster as a cofactor.

The protein localises to the cell inner membrane. The catalysed reaction is a quinone + NADH + 5 H(+)(in) = a quinol + NAD(+) + 4 H(+)(out). NDH-1 shuttles electrons from NADH, via FMN and iron-sulfur (Fe-S) centers, to quinones in the respiratory chain. The immediate electron acceptor for the enzyme in this species is believed to be ubiquinone. Couples the redox reaction to proton translocation (for every two electrons transferred, four hydrogen ions are translocated across the cytoplasmic membrane), and thus conserves the redox energy in a proton gradient. The chain is NADH-quinone oxidoreductase subunit I from Chelativorans sp. (strain BNC1).